Reading from the N-terminus, the 119-residue chain is Large ribosomal subunit protein bL20 (119 aa).

The protein belongs to the bacterial ribosomal protein bL20 family.

Its function is as follows. Binds directly to 23S ribosomal RNA and is necessary for the in vitro assembly process of the 50S ribosomal subunit. It is not involved in the protein synthesizing functions of that subunit. The protein is Large ribosomal subunit protein bL20 of Alkaliphilus oremlandii (strain OhILAs) (Clostridium oremlandii (strain OhILAs)).